Reading from the N-terminus, the 248-residue chain is Glutathione S-transferase omega-2 (248 aa).

A GST N-terminal domain is found at 22 to 101 (GVIRIYSMRF…YLDDVYPGRK (80 aa)). The active-site Nucleophile is cysteine 32. Glutathione contacts are provided by residues lysine 59, isoleucine 72, and 85–86 (ES). Residues 106–231 (DPYERARQKM…VFLGFLNLYF (126 aa)) enclose the GST C-terminal domain.

It belongs to the GST superfamily. Omega family.

It carries out the reaction RX + glutathione = an S-substituted glutathione + a halide anion + H(+). It catalyses the reaction L-dehydroascorbate + 2 glutathione = glutathione disulfide + L-ascorbate. The catalysed reaction is methylarsonate + 2 glutathione + H(+) = methylarsonous acid + glutathione disulfide + H2O. In terms of biological role, exhibits glutathione-dependent thiol transferase activity. Has high dehydroascorbate reductase activity and may contribute to the recycling of ascorbic acid. Participates in the biotransformation of inorganic arsenic and reduces monomethylarsonic acid (MMA). This is Glutathione S-transferase omega-2 (Gsto2) from Mus musculus (Mouse).